The chain runs to 382 residues: Flap endonuclease 1 (382 aa).

An N-domain region spans residues 1–104 (MGILGLSKLI…GELAKRAERR (104 aa)). Aspartate 34 serves as a coordination point for Mg(2+). Positions 47 and 70 each coordinate DNA. Residue aspartate 86 participates in Mg(2+) binding. Residues 95 to 118 (GELAKRAERREDAQKALEKATEAG) form a disordered region. The span at 96-115 (ELAKRAERREDAQKALEKAT) shows a compositional bias: basic and acidic residues. An I-domain region spans residues 122-253 (DMDKFNRRLV…KRATELMNSY (132 aa)). Mg(2+) contacts are provided by glutamate 158, glutamate 160, aspartate 179, and aspartate 181. A DNA-binding site is contributed by glutamate 158. DNA contacts are provided by glycine 231 and aspartate 233. Mg(2+) is bound at residue aspartate 233. Positions 336 to 344 (TQGRLDSFF) are interaction with PCNA. The disordered stretch occupies residues 353-382 (TTPKRKADDKNNVQQKKSKTAGNTKGKRPK). Residues 364 to 375 (NVQQKKSKTAGN) show a composition bias toward polar residues.

This sequence belongs to the XPG/RAD2 endonuclease family. FEN1 subfamily. As to quaternary structure, interacts with PCNA. Three molecules of FEN1 bind to one PCNA trimer with each molecule binding to one PCNA monomer. PCNA stimulates the nuclease activity without altering cleavage specificity. Mg(2+) is required as a cofactor. Phosphorylated. Phosphorylation upon DNA damage induces relocalization to the nuclear plasma.

The protein resides in the nucleus. It is found in the nucleolus. Its subcellular location is the nucleoplasm. It localises to the mitochondrion. Functionally, structure-specific nuclease with 5'-flap endonuclease and 5'-3' exonuclease activities involved in DNA replication and repair. During DNA replication, cleaves the 5'-overhanging flap structure that is generated by displacement synthesis when DNA polymerase encounters the 5'-end of a downstream Okazaki fragment. It enters the flap from the 5'-end and then tracks to cleave the flap base, leaving a nick for ligation. Also involved in the long patch base excision repair (LP-BER) pathway, by cleaving within the apurinic/apyrimidinic (AP) site-terminated flap. Acts as a genome stabilization factor that prevents flaps from equilibrating into structures that lead to duplications and deletions. Also possesses 5'-3' exonuclease activity on nicked or gapped double-stranded DNA, and exhibits RNase H activity. Also involved in replication and repair of rDNA and in repairing mitochondrial DNA. The polypeptide is Flap endonuclease 1 (Glossina morsitans morsitans (Savannah tsetse fly)).